We begin with the raw amino-acid sequence, 815 residues long: MVKFSREYEASIIPEWKAAFVDYKRLKKLIKRIKVTRRDDSFAAANAAAAADHLLPPPPAEKEAGGYGFSILDPVRAIAARFSAGQQPSASEDEECPDRGELVRSTDKHEREFMERADEELEKVNAFYTGQEAELLARGDALLEQLRILADVKRILADHAAARRARGLARSRSMPPPPPSSSPPSSVHGSSGRYLLSGLSSPQSMSDGSLELQQAQVSEGAAVADEVMAALERNGVSFVGLAGKKDGKTKDGSGKGRGGGGGGGGGVLQLPATVRIDIPATSPGRAALKVWEELVNVLRKDGADPAAAFVHRKKIQHAEKNIRDAFMALYRGLELLKKFSSLNVKAFTKILKKFVKVSEQQRATDLFSEKVKRSPFSSSDKVLQLADEVECIFMKHFTGNDRKVAMKYLKPQQPRNTHMITFLVGLFTGTFVSLFIIYAILAHVSGIFTSTGNSAYMEIVYHVFSMFALISLHIFLYGCNLFMWKNTRINHNFIFDFSSNTALTHRDAFLMSASIMCTVVAALVINLFLKNAGVAYANALPGALLLLSTGVLFCPFDIFYRSTRYCFMRVMRNIIFSPFYKVLMADFFMADQLTSQIPLLRHMEFTACYFMAGSFRTHPYETCTSGQQYKHLAYVISFLPYFWRALQCLRRYLEEGHDINQLANAGKYVSAMVAAAVRFKYAATPTPFWVWMVIISSSGATIYQLYWDFVKDWGFLNPKSKNRWLRNELILKNKSIYYVSMMLNLALRLAWTESVMKIHIGKVESRLLDFSLASLEIIRRGHWNFYRLENEHLNNVGKFRAVKTVPLPFRELETD.

Topologically, residues M1–T421 are cytoplasmic. The region spanning V2 to S368 is the SPX domain. Disordered stretches follow at residues S83 to K108, R166 to Q213, and A242 to G266. The segment covering P97–K108 has biased composition (basic and acidic residues). Residues P183–S201 show a composition bias toward low complexity. Over residues P202–Q213 the composition is skewed to polar residues. Positions G243 to G254 are enriched in basic and acidic residues. The segment covering K255–G266 has biased composition (gly residues). Residues F422–A442 traverse the membrane as a helical segment. Over H443–E458 the chain is Extracellular. The helical transmembrane segment at I459–C479 threads the bilayer. At N480–A508 the chain is on the cytoplasmic side. The chain crosses the membrane as a helical span at residues F509–L529. Residues K530–N538 are Extracellular-facing. Residues A539–F559 traverse the membrane as a helical segment. Residues Y560–T686 lie on the Cytoplasmic side of the membrane. One can recognise an EXS domain in the interval T624 to D815. A helical membrane pass occupies residues P687–W707. At D708 to K734 the chain is on the extracellular side. Residues S735–W751 form a helical membrane-spanning segment. Topologically, residues T752–D815 are cytoplasmic.

Belongs to the SYG1 (TC 2.A.94) family. As to expression, specifically expressed in roots.

It is found in the cell membrane. Functionally, involved in the transfer of inorganic phosphate (Pi) from roots to shoots. This chain is Phosphate transporter PHO1-2 (PHO1-2), found in Oryza sativa subsp. japonica (Rice).